A 199-amino-acid polypeptide reads, in one-letter code: Prolactin (199 aa).

The cysteines at positions 4 and 11 are disulfide-linked. Ser-26 bears the Phosphoserine mark. The N-linked (GlcNAc...) asparagine; partial glycan is linked to Asn-31. Residues Ser-34 and Ser-90 each carry the phosphoserine modification. Cystine bridges form between Cys-58–Cys-174 and Cys-191–Cys-199.

It belongs to the somatotropin/prolactin family. In terms of assembly, interacts with PRLR.

It localises to the secreted. Prolactin acts primarily on the mammary gland by promoting lactation. The sequence is that of Prolactin (PRL) from Camelus dromedarius (Dromedary).